The primary structure comprises 565 residues: Transcription factor asqA (565 aa).

The fungal transcription factor domain stretch occupies residues 204–273; the sequence is MDTAMAQAVR…HSMPALCIDS (70 aa).

The protein localises to the nucleus. In terms of biological role, transcription factor that regulates specifically the 4'-methoxyviridicatin/aspoquinolone biosynthesis cluster. The protein is Transcription factor asqA of Emericella nidulans (strain FGSC A4 / ATCC 38163 / CBS 112.46 / NRRL 194 / M139) (Aspergillus nidulans).